We begin with the raw amino-acid sequence, 246 residues long: Ribosomal RNA small subunit methyltransferase J (246 aa).

S-adenosyl-L-methionine contacts are provided by residues 115-116 (ER) and D169.

The protein belongs to the methyltransferase superfamily. RsmJ family.

The protein resides in the cytoplasm. It carries out the reaction guanosine(1516) in 16S rRNA + S-adenosyl-L-methionine = N(2)-methylguanosine(1516) in 16S rRNA + S-adenosyl-L-homocysteine + H(+). Functionally, specifically methylates the guanosine in position 1516 of 16S rRNA. This is Ribosomal RNA small subunit methyltransferase J from Buchnera aphidicola subsp. Acyrthosiphon pisum (strain APS) (Acyrthosiphon pisum symbiotic bacterium).